The sequence spans 135 residues: Sex-regulated protein janus-A (135 aa).

Lys-37 lines the substrate pocket. His-63 functions as the Proton acceptor in the catalytic mechanism. 104–106 (SQG) lines the substrate pocket.

The protein belongs to the janus family. In terms of tissue distribution, somatic and germline cells. Isoform B is expressed in both sexes and in somatic and germ line cells. Isoform A is expressed in males and is germ line specific.

In terms of biological role, janA and janB regulate somatic sex differentiation. The polypeptide is Sex-regulated protein janus-A (janA) (Drosophila melanogaster (Fruit fly)).